A 91-amino-acid polypeptide reads, in one-letter code: Small ribosomal subunit protein bS20 (91 aa).

The tract at residues Met1–Ser23 is disordered. A compositionally biased stretch (basic residues) spans Ala7 to His20.

It belongs to the bacterial ribosomal protein bS20 family.

In terms of biological role, binds directly to 16S ribosomal RNA. The polypeptide is Small ribosomal subunit protein bS20 (Pseudomonas paraeruginosa (strain DSM 24068 / PA7) (Pseudomonas aeruginosa (strain PA7))).